The primary structure comprises 186 residues: UPF0200 protein Hbut_0338 (186 aa).

13–20 (GMPGSGKS) contributes to the ATP binding site.

It belongs to the UPF0200 family.

In Hyperthermus butylicus (strain DSM 5456 / JCM 9403 / PLM1-5), this protein is UPF0200 protein Hbut_0338.